The chain runs to 376 residues: E3 ubiquitin-protein ligase RNF133 (376 aa).

The 103-residue stretch at 65 to 167 (SSTLKRVAGV…LKGTEIFHLI (103 aa)) folds into the PA domain. Residues 190–210 (YLVSFVIVTTATLAYFIFYHI) traverse the membrane as a helical segment. The RING-type; atypical zinc-finger motif lies at 256-297 (CVICFEHYKPNDIVRILTCKHFFHKNCIDPWILSHGTCPICK). The interval 328-376 (TLSPSEEETNNEVSPAGTSDKVIHVEENPTSQNNDSQPHSVVEDVHPSP) is disordered. Over residues 355 to 366 (NPTSQNNDSQPH) the composition is skewed to polar residues.

As to quaternary structure, interacts with E3 ligase UBE2J1. Post-translationally, auto-ubiquitinated.

The protein localises to the endoplasmic reticulum membrane. It catalyses the reaction S-ubiquitinyl-[E2 ubiquitin-conjugating enzyme]-L-cysteine + [acceptor protein]-L-lysine = [E2 ubiquitin-conjugating enzyme]-L-cysteine + N(6)-ubiquitinyl-[acceptor protein]-L-lysine.. It functions in the pathway protein modification; protein ubiquitination. Has E3 ubiquitin-protein ligase activity. Plays a role in male fecundity through the interaction with the E2 ubituitin-protein ligase UBE2J1. The sequence is that of E3 ubiquitin-protein ligase RNF133 (RNF133) from Macaca fascicularis (Crab-eating macaque).